The sequence spans 317 residues: Acetyl-coenzyme A carboxylase carboxyl transferase subunit alpha (317 aa).

The CoA carboxyltransferase C-terminal domain occupies 40-294 (RLQKKSEELT…KQQILADLQD (255 aa)).

This sequence belongs to the AccA family. As to quaternary structure, acetyl-CoA carboxylase is a heterohexamer composed of biotin carboxyl carrier protein (AccB), biotin carboxylase (AccC) and two subunits each of ACCase subunit alpha (AccA) and ACCase subunit beta (AccD).

It is found in the cytoplasm. It carries out the reaction N(6)-carboxybiotinyl-L-lysyl-[protein] + acetyl-CoA = N(6)-biotinyl-L-lysyl-[protein] + malonyl-CoA. It participates in lipid metabolism; malonyl-CoA biosynthesis; malonyl-CoA from acetyl-CoA: step 1/1. In terms of biological role, component of the acetyl coenzyme A carboxylase (ACC) complex. First, biotin carboxylase catalyzes the carboxylation of biotin on its carrier protein (BCCP) and then the CO(2) group is transferred by the carboxyltransferase to acetyl-CoA to form malonyl-CoA. In Actinobacillus pleuropneumoniae serotype 5b (strain L20), this protein is Acetyl-coenzyme A carboxylase carboxyl transferase subunit alpha.